Here is a 292-residue protein sequence, read N- to C-terminus: Protein-L-isoaspartate O-methyltransferase (292 aa).

Residues 1–76 form a disordered region; the sequence is MTEKKRFPLS…AAAPSSNERA (76 aa). The span at 28–48 shows a compositional bias: polar residues; sequence NRSSTSGKVATPQTATQNASQ. Serine 138 is an active-site residue.

It belongs to the methyltransferase superfamily. L-isoaspartyl/D-aspartyl protein methyltransferase family.

Its subcellular location is the cytoplasm. The enzyme catalyses [protein]-L-isoaspartate + S-adenosyl-L-methionine = [protein]-L-isoaspartate alpha-methyl ester + S-adenosyl-L-homocysteine. Catalyzes the methyl esterification of L-isoaspartyl residues in peptides and proteins that result from spontaneous decomposition of normal L-aspartyl and L-asparaginyl residues. It plays a role in the repair and/or degradation of damaged proteins. This chain is Protein-L-isoaspartate O-methyltransferase, found in Janthinobacterium sp. (strain Marseille) (Minibacterium massiliensis).